A 92-amino-acid chain; its full sequence is Small ribosomal subunit protein uS19c (92 aa).

Belongs to the universal ribosomal protein uS19 family.

Its subcellular location is the plastid. It localises to the chloroplast. In terms of biological role, protein S19 forms a complex with S13 that binds strongly to the 16S ribosomal RNA. The protein is Small ribosomal subunit protein uS19c of Lobularia maritima (Sweet alyssum).